We begin with the raw amino-acid sequence, 238 residues long: Ribosomal RNA small subunit methyltransferase G (238 aa).

S-adenosyl-L-methionine is bound by residues Gly-77, Phe-82, 128–129 (AE), and Arg-146. Positions 216-238 (KKRQTPKKYPRKPGTPNKEPLLK) are disordered.

It belongs to the methyltransferase superfamily. RNA methyltransferase RsmG family.

Its subcellular location is the cytoplasm. Specifically methylates the N7 position of guanine in position 535 of 16S rRNA. This is Ribosomal RNA small subunit methyltransferase G from Macrococcus caseolyticus (strain JCSC5402) (Macrococcoides caseolyticum).